A 154-amino-acid polypeptide reads, in one-letter code: MASASARGNQDKDAHFPPPSKQSLLFCPKSKLHIHRAEISKIMRECQEESFWKRALPFSLVSMLVTQGLVYQGYLAANSRFGSLPKVALAGLLGFGLGKVSYIGVCQSKFHFFEDQLRGAGFGPQHNRHCLLTCEECKIKHGLSEKGDSQPSAS.

The tract at residues 1 to 22 (MASASARGNQDKDAHFPPPSKQ) is disordered. The OCIA domain occupies 1 to 120 (MASASARGNQ…HFFEDQLRGA (120 aa)). Residue Lys-41 is modified to N6-acetyllysine.

Interacts (via OCIA domain) with OCIAD1/ASRIJ and STAT3.

It localises to the endosome. Its subcellular location is the mitochondrion. The protein resides in the mitochondrion inner membrane. Has an essential role in the assembly of mitochondrial respiratory chain complex III. Is also required for STAT3 activation and plays a role in cell migration. The polypeptide is OCIA domain-containing protein 2 (OCIAD2) (Homo sapiens (Human)).